The primary structure comprises 254 residues: Ribosomal RNA small subunit methyltransferase G (254 aa).

Positions 84–109 (NTESKTSLNNAETKNTNEALLTSEPF) are insert. S-adenosyl-L-methionine-binding positions include G115, F120, 171–172 (AE), and R185.

Belongs to the methyltransferase superfamily. RNA methyltransferase RsmG family.

The protein localises to the cytoplasm. In terms of biological role, specifically methylates the N7 position of a guanine in 16S rRNA. The sequence is that of Ribosomal RNA small subunit methyltransferase G from Treponema denticola (strain ATCC 35405 / DSM 14222 / CIP 103919 / JCM 8153 / KCTC 15104).